Consider the following 189-residue polypeptide: dCTP deaminase, dUMP-forming (189 aa).

DCTP contacts are provided by residues 101 to 106 (KSSLGR), D119, 127 to 129 (TLE), Q148, Y162, and Q174. E129 (proton donor/acceptor) is an active-site residue. The interval 163 to 189 (GSSEAGSKYQGQRGPTPSKAYLNFNRS) is disordered.

The protein belongs to the dCTP deaminase family. As to quaternary structure, homotrimer.

The catalysed reaction is dCTP + 2 H2O = dUMP + NH4(+) + diphosphate. The protein operates within pyrimidine metabolism; dUMP biosynthesis; dUMP from dCTP: step 1/1. Functionally, bifunctional enzyme that catalyzes both the deamination of dCTP to dUTP and the hydrolysis of dUTP to dUMP without releasing the toxic dUTP intermediate. This chain is dCTP deaminase, dUMP-forming, found in Rhodococcus erythropolis (strain PR4 / NBRC 100887).